The chain runs to 78 residues: Large ribosomal subunit protein bL28 (78 aa).

Residues 1–33 are disordered; that stretch reads MARKDDVTGEGPVTGNSVSDSNQKTNRRFKRNL. Polar residues predominate over residues 14–24; that stretch reads TGNSVSDSNQK.

Belongs to the bacterial ribosomal protein bL28 family.

This Salinibacter ruber (strain DSM 13855 / M31) protein is Large ribosomal subunit protein bL28.